We begin with the raw amino-acid sequence, 166 residues long: Lipoprotein signal peptidase (166 aa).

The next 4 helical transmembrane spans lie at Ala-9–Leu-29, Ala-45–Leu-65, Trp-71–Leu-91, and Phe-100–Val-120. Active-site residues include Asp-126 and Asp-144. A helical transmembrane segment spans residues Trp-135–Ile-155.

Belongs to the peptidase A8 family.

Its subcellular location is the cell inner membrane. The enzyme catalyses Release of signal peptides from bacterial membrane prolipoproteins. Hydrolyzes -Xaa-Yaa-Zaa-|-(S,diacylglyceryl)Cys-, in which Xaa is hydrophobic (preferably Leu), and Yaa (Ala or Ser) and Zaa (Gly or Ala) have small, neutral side chains.. Its pathway is protein modification; lipoprotein biosynthesis (signal peptide cleavage). Functionally, this protein specifically catalyzes the removal of signal peptides from prolipoproteins. This is Lipoprotein signal peptidase from Burkholderia cenocepacia (strain HI2424).